The chain runs to 983 residues: Receptor-like protein 19 (983 aa).

The signal sequence occupies residues 1 to 25 (MMKGYITLSFLIILIFNFLDEFAAS). At 26-937 (TRHLCDPDQS…EEDEEEVISW (912 aa)) the chain is on the extracellular side. Residues Asn66 and Asn102 are each glycosylated (N-linked (GlcNAc...) asparagine). 31 LRR repeats span residues 82 to 108 (FGDVIELDLSFSCLRGQLNSNSSLFRL), 111 to 135 (LRFLTTLDLSNNDFIGQIPSSLETL), 136 to 159 (SNLTTLDLSRNHFSGRIPSSIGNL), 161 to 183 (HLIFVDFSHNNFSGQIPSSLGYL), 184 to 207 (SHLTSFNLSYNNFSGRVPSSIGNL), 209 to 231 (YLTTLRLSRNSFFGELPSSLGSL), 232 to 255 (FHLTDLILDTNHFVGKIPSSLGNL), 256 to 281 (SHLTSIDLHKNNFVGEIPFSLGNLSC), 283 to 302 (TSFILSDNNIVGEIPSSFGN), 303 to 327 (LNQLDILNVKSNKLSGSFPIALLNL), 328 to 351 (RKLSTLSLFNNRLTGTLPSNMSSL), 353 to 375 (NLKLFDATENHFTGPLPSSLFNI), 376 to 399 (PSLKTITLENNQLNGSLGFGNISS), 401 to 424 (SNLTVLRLGNNNFRGPIHRSISKL), 425 to 448 (VNLKELDLSNYNTQGLVDFTIFSH), 450 to 474 (KSIEYLNLSHLNTTTTIDMYEILSS), 475 to 498 (FKLLDTLDLSGSHVSTTNKSSLSN), 501 to 524 (LVLISQLYLSGCGITEFPKFLRSQ), 525 to 548 (ELMLTLDISNNKIKGQVPGWLWML), 550 to 571 (VLNYVNLSNNTFIGFERSTKLG), 578 to 602 (PPAMRQLFCSNNNFTGNIPSFICEL), 603 to 628 (PYLSTLDFSNNKFNGSIPTCMGNIQS), 629 to 652 (PYLQALNLRHNRLSGLLPENIFES), 654 to 674 (ISLDVGHNQLVGKLPRSLSHI), 675 to 700 (SSLGLLNVESNKISDTFPLWLSSLQE), 702 to 720 (QVLVLRSNAFYGPIEKTQF), 721 to 744 (SKLRIIDISGNQFNGTLPANFFVN), 793 to 817 (LKVFTVIDFSGNKFEGEIPKSIGLL), 818 to 840 (KELHVLNLSNNALSGHIASSMGN), 841 to 865 (LMALESLDVSQNKLSGEIPQELGKL), and 867 to 890 (YLAYMNFSHNQLVGLLPGGTQFQT). N-linked (GlcNAc...) asparagine glycosylation is found at Asn137, Asn158, Asn171, Asn190, Asn195, and Asn206. N-linked (GlcNAc...) asparagine glycans are attached at residues Asn254 and Asn278. An N-linked (GlcNAc...) asparagine glycan is attached at Asn347. 3 N-linked (GlcNAc...) asparagine glycosylation sites follow: Asn389, Asn396, and Asn402. Residues Asn456, Asn461, Asn492, and Asn498 are each glycosylated (N-linked (GlcNAc...) asparagine). N-linked (GlcNAc...) asparagine glycosylation is found at Asn555, Asn558, Asn590, and Asn616. N-linked (GlcNAc...) asparagine glycans are attached at residues Asn734 and Asn744. N-linked (GlcNAc...) asparagine glycosylation occurs at Asn824. A glycan (N-linked (GlcNAc...) asparagine) is linked at Asn872. A helical transmembrane segment spans residues 938–958 (IAAVIGFILGTALGLTFGCIL). At 959–983 (FSYKPDWFKNPFVRDKRRNIGTITH) the chain is on the cytoplasmic side.

The protein belongs to the RLP family.

The protein localises to the cell membrane. This Arabidopsis thaliana (Mouse-ear cress) protein is Receptor-like protein 19.